The chain runs to 123 residues: U11/U12 small nuclear ribonucleoprotein 25 kDa protein (123 aa).

The region spanning 32 to 123 (MTVRVCKMDG…VSFIKKLRQK (92 aa)) is the Ubiquitin-like domain.

In terms of assembly, component of the U11/U12 snRNPs that are part of the U12-type spliceosome.

It is found in the nucleus. The sequence is that of U11/U12 small nuclear ribonucleoprotein 25 kDa protein (Snrnp25) from Mus musculus (Mouse).